Reading from the N-terminus, the 351-residue chain is MKKTAIAITVALAGFATVAQAAPKDNTWYTGAKLGWSQYHDTGFIDNNGPTHENQLGAGAFGGYQVNPYVGFEMGYDWLGRMPYKGSVENGAYKAQGVQLTAKLGYPITDDLDVYTRLGGMVWRADTKAHNNVTGESEKNHDTGVSPVFAGGVEWAITPEIATRLEYQWTNNIGDAHTIGTRPDNGLLSLGVSYRFGQGEAAPVVAPAPAPAPEVQTKHFTLKSDVLFNFNKATLKPEGQAALDQLYSQLSNLDPKDGSVVVLGYTDRIGSDAYNQGLSERRAQSVVDYLISKGIPADKISARGMGESNPVTGNTCDNVKQRAALIDCLAPDRRVEIEVKGIKDVVTQPQA.

An N-terminal signal peptide occupies residues 1–21; sequence MKKTAIAITVALAGFATVAQA. 8 consecutive transmembrane segments (beta stranded) span residues 27–37, 55–66, 70–78, 96–107, 112–120, 147–156, 161–168, and 187–195; these read TWYTGAKLGWS, QLGAGAFGGYQV, VGFEMGYDW, QGVQLTAKLGYP, LDVYTRLGG, PVFAGGVEWA, IATRLEYQ, and LLSLGVSYR. 4 tandem repeats follow at residues 206-207, 208-209, 210-211, and 212-213. A 4 X 2 AA tandem repeats of A-P region spans residues 206-213; it reads APAPAPAP. The 129-residue stretch at 215 to 343 folds into the OmpA-like domain; it reads VQTKHFTLKS…RVEIEVKGIK (129 aa). Cysteines 316 and 328 form a disulfide.

The protein belongs to the outer membrane OOP (TC 1.B.6) superfamily. OmpA family. In terms of assembly, monomer and homodimer.

The protein resides in the cell outer membrane. Its function is as follows. With TolR probably plays a role in maintaining the position of the peptidoglycan cell wall in the periplasm. Acts as a porin with low permeability that allows slow penetration of small solutes; an internal gate slows down solute passage. Required for conjugation with F-type plasmids; probably serves as the mating receptor on recipient cells. The sequence is that of Outer membrane protein A from Shigella dysenteriae.